Reading from the N-terminus, the 380-residue chain is Gibberellin 20 oxidase 3 (380 aa).

Residues 221 to 321 (DSDSIFRLNY…RKTFAFFLCP (101 aa)) form the Fe2OG dioxygenase domain. Residues H246, D248, and H302 each contribute to the Fe cation site. Residue R312 is part of the active site.

It belongs to the iron/ascorbate-dependent oxidoreductase family. GA20OX subfamily. Fe(2+) is required as a cofactor. L-ascorbate serves as cofactor. As to expression, expressed at high level in developing siliques. Detected in seeds, roots, leaves and inflorescences. In seeds, specifically detected at the outer layer of the outer integument.

It catalyses the reaction gibberellin A12 + 2 2-oxoglutarate + 3 O2 + H(+) = gibberellin A9 + 2 succinate + 3 CO2 + 2 H2O. It carries out the reaction gibberellin A12 + 3 2-oxoglutarate + 3 O2 = gibberellin A25 + 3 succinate + 3 CO2 + H2O + H(+). The catalysed reaction is gibberellin A53 + 2 2-oxoglutarate + 3 O2 + H(+) = gibberellin A20 + 2 succinate + 3 CO2 + 2 H2O. Its pathway is plant hormone biosynthesis; gibberellin biosynthesis. Key oxidase enzyme in the biosynthesis of gibberellin that catalyzes the conversion of GA12 and GA53 to GA9 and GA20 respectively, via a three-step oxidation at C-20 of the GA skeleton, and GA25 is also formed as a minor product. GA53 is less effectively oxidized than GA12. The sequence is that of Gibberellin 20 oxidase 3 (GA20OX3) from Arabidopsis thaliana (Mouse-ear cress).